A 177-amino-acid chain; its full sequence is Peptide methionine sulfoxide reductase MsrA (177 aa).

Cysteine 10 is an active-site residue.

Belongs to the MsrA Met sulfoxide reductase family.

The enzyme catalyses L-methionyl-[protein] + [thioredoxin]-disulfide + H2O = L-methionyl-(S)-S-oxide-[protein] + [thioredoxin]-dithiol. It catalyses the reaction [thioredoxin]-disulfide + L-methionine + H2O = L-methionine (S)-S-oxide + [thioredoxin]-dithiol. In terms of biological role, has an important function as a repair enzyme for proteins that have been inactivated by oxidation. Catalyzes the reversible oxidation-reduction of methionine sulfoxide in proteins to methionine. This chain is Peptide methionine sulfoxide reductase MsrA, found in Saccharolobus solfataricus (strain ATCC 35092 / DSM 1617 / JCM 11322 / P2) (Sulfolobus solfataricus).